A 118-amino-acid polypeptide reads, in one-letter code: Large ribosomal subunit protein bL19 (118 aa).

This sequence belongs to the bacterial ribosomal protein bL19 family.

Functionally, this protein is located at the 30S-50S ribosomal subunit interface and may play a role in the structure and function of the aminoacyl-tRNA binding site. The polypeptide is Large ribosomal subunit protein bL19 (Teredinibacter turnerae (strain ATCC 39867 / T7901)).